We begin with the raw amino-acid sequence, 1979 residues long: Myosin-11 (1979 aa).

Ser2 bears the Blocked amino end (Ser) mark. A Myosin N-terminal SH3-like domain is found at Ser30–Pro80. Positions Ser84–Asp789 constitute a Myosin motor domain. N6,N6,N6-trimethyllysine is present on Lys128. Gly177–Thr184 provides a ligand contact to ATP. Actin-binding stretches follow at residues Leu667–His689 and Arg768–Ala782. Positions Ile792 to Ala821 constitute an IQ domain. A rodlike tail (S2 and LMM domains) region spans residues Leu850 to Glu1979. The stretch at Leu850 to Glu1979 forms a coiled coil. 3 disordered regions span residues Gln1130 to Leu1150, Arg1709 to Glu1736, and Gln1891 to Glu1979. Basic and acidic residues predominate over residues Ser1135 to Leu1150. Residues Gly1968 to Glu1979 are compositionally biased toward basic and acidic residues.

It belongs to the TRAFAC class myosin-kinesin ATPase superfamily. Myosin family. As to quaternary structure, muscle myosin is a hexameric protein that consists of 2 heavy chain subunits (MHC), 2 alkali light chain subunits (MLC) and 2 regulatory light chain subunits (MLC-2).

It localises to the cytoplasm. The protein localises to the myofibril. Muscle contraction. This is Myosin-11 (MYH11) from Gallus gallus (Chicken).